Here is a 206-residue protein sequence, read N- to C-terminus: Protein-methionine-sulfoxide reductase heme-binding subunit MsrQ (206 aa).

6 helical membrane passes run 14–34 (IKPL…WLGA), 45–65 (FLTR…LAIT), 82–102 (MCGL…VWWD), 118–138 (PFIT…ATST), 149–169 (WQTL…HFWW), and 179–199 (QPLL…AAWW).

It belongs to the MsrQ family. As to quaternary structure, heterodimer of a catalytic subunit (MsrP) and a heme-binding subunit (MsrQ). Requires FMN as cofactor. Heme b serves as cofactor.

Its subcellular location is the cell inner membrane. In terms of biological role, part of the MsrPQ system that repairs oxidized periplasmic proteins containing methionine sulfoxide residues (Met-O), using respiratory chain electrons. Thus protects these proteins from oxidative-stress damage caused by reactive species of oxygen and chlorine generated by the host defense mechanisms. MsrPQ is essential for the maintenance of envelope integrity under bleach stress, rescuing a wide series of structurally unrelated periplasmic proteins from methionine oxidation. MsrQ provides electrons for reduction to the reductase catalytic subunit MsrP, using the quinone pool of the respiratory chain. This is Protein-methionine-sulfoxide reductase heme-binding subunit MsrQ from Bordetella pertussis (strain Tohama I / ATCC BAA-589 / NCTC 13251).